Here is a 148-residue protein sequence, read N- to C-terminus: Large ribosomal subunit protein bL9 (148 aa).

The protein belongs to the bacterial ribosomal protein bL9 family.

Functionally, binds to the 23S rRNA. The chain is Large ribosomal subunit protein bL9 from Clostridium perfringens (strain ATCC 13124 / DSM 756 / JCM 1290 / NCIMB 6125 / NCTC 8237 / Type A).